A 399-amino-acid chain; its full sequence is S-adenosylmethionine synthase (399 aa).

Position 17 (histidine 17) interacts with ATP. Aspartate 19 contacts Mg(2+). Residue glutamate 52 coordinates K(+). Residues glutamate 65 and glutamine 109 each contribute to the L-methionine site. The tract at residues 109-119 (QSADIAQGVDA) is flexible loop. Residues 177 to 179 (DSK), 243 to 244 (KF), aspartate 252, 258 to 259 (RK), alanine 275, and lysine 279 each bind ATP. Position 252 (aspartate 252) interacts with L-methionine. Residue lysine 283 participates in L-methionine binding.

It belongs to the AdoMet synthase family. In terms of assembly, homotetramer; dimer of dimers. Requires Mg(2+) as cofactor. It depends on K(+) as a cofactor.

The protein resides in the cytoplasm. The catalysed reaction is L-methionine + ATP + H2O = S-adenosyl-L-methionine + phosphate + diphosphate. Its pathway is amino-acid biosynthesis; S-adenosyl-L-methionine biosynthesis; S-adenosyl-L-methionine from L-methionine: step 1/1. Its function is as follows. Catalyzes the formation of S-adenosylmethionine (AdoMet) from methionine and ATP. The overall synthetic reaction is composed of two sequential steps, AdoMet formation and the subsequent tripolyphosphate hydrolysis which occurs prior to release of AdoMet from the enzyme. This chain is S-adenosylmethionine synthase, found in Bradyrhizobium sp. (strain ORS 278).